The following is a 340-amino-acid chain: Alpha-1,3-galactosyltransferase 2 (340 aa).

At 1–12 (MALKEGLRAWKR) the chain is on the cytoplasmic side. A helical; Signal-anchor for type II membrane protein membrane pass occupies residues 13–32 (IFWRQILLTLGLLGLFLYGL). The Lumenal segment spans residues 33–340 (PKFRHLEALI…APKGYRLLRN (308 aa)). N58 and N100 each carry an N-linked (GlcNAc...) asparagine glycan. Mn(2+)-binding residues include D199 and D201.

Belongs to the glycosyltransferase 6 family. The cofactor is Mn(2+). As to expression, expressed in thymus and monocyte derived dendritic cells.

It is found in the golgi apparatus. It localises to the golgi stack membrane. It carries out the reaction a beta-D-galactosyl-(1-&gt;4)-N-acetyl-beta-D-glucosaminyl derivative + UDP-alpha-D-galactose = an alpha-D-galactosyl-(1-&gt;3)-beta-D-galactosyl-(1-&gt;4)-N-acetyl-beta-D-glucosaminyl derivative + UDP + H(+). It catalyses the reaction a beta-D-Gal-(1-&gt;4)-beta-D-Glc-(1&lt;-&gt;1)-Cer(d18:1(4E)) + UDP-alpha-D-galactose = an isogloboside iGb3Cer (d18:1(4E)) + UDP + H(+). The enzyme catalyses a globoside Gb3Cer + UDP-alpha-D-galactose = a globoside GalGb3Cer + UDP + H(+). Synthesizes the galactose-alpha(1,3)-galactose group on the glycosphingolipid isoglobotrihexosylceramide or isogloboside 3 (iGb3) by catalyzing the transfer of galactose from UDP-Galactose to its acceptor molecule Gal-beta-1,4-Glc-ceramide. Can also catalyze the addition of galactose to iGb3 itself to form polygalactose structures. This Homo sapiens (Human) protein is Alpha-1,3-galactosyltransferase 2.